We begin with the raw amino-acid sequence, 719 residues long: MGEKNGDAKTFWMELEDDGKVDFIFEQVQNVLQSLKQKIKDGSATNKEYIQAMILVNEATIINSSTSIKGASQKEVNAQSSDPMPVTQKEQENKSNAFPSTSCENSFPEDCTFLTTENKEILSLEDKVVDFREKDSSSNLSYQSHDCSGACLMKMPLNLKGENPLQLPIKCHFQRRHAKTNSHSSALHVSYKTPCGRSLRNVEEVFRYLLETECNFLFTDNFSFNTYVQLARNYPKQKEVVSDVDISNGVESVPISFCNEIDSRKLPQFKYRKTVWPRAYNLTNFSSMFTDSCDCSEGCIDITKCACLQLTARNAKTSPLSSDKITTGYKYKRLQRQIPTGIYECSLLCKCNRQLCQNRVVQHGPQVRLQVFKTEQKGWGVRCLDDIDRGTFVCIYSGRLLSRANTEKSYGIDENGRDENTMKNIFSKKRKLEVACSDCEVEVLPLGLETHPRTAKTEKCPPKFSNNPKELTVETKYDNISRIQYHSVIRDPESKTAIFQHNGKKMEFVSSESVTPEDNDGFKPPREHLNSKTKGAQKDSSSNHVDEFEDNLLIESDVIDITKYREETPPRSRCNQATTLDNQNIKKAIEVQIQKPQEGRSTACQRQQVFCDEELLSETKNTSSDSLTKFNKGNVFLLDATKEGNVGRFLNHSCCPNLLVQNVFVETHNRNFPLVAFFTNRYVKARTELTWDYGYEAGTVPEKEIFCQCGVNKCRKKIL.

Over residues 72–82 (SQKEVNAQSSD) the composition is skewed to polar residues. Residues 72–102 (SQKEVNAQSSDPMPVTQKEQENKSNAFPSTS) are disordered. The 73-residue stretch at 157–229 (LNLKGENPLQ…DNFSFNTYVQ (73 aa)) folds into the MBD domain. The Pre-SET domain maps to 291 to 364 (DSCDCSEGCI…LCQNRVVQHG (74 aa)). Residues C293, C295, C299, C305, C307, C345, C349, C351, and C356 each contribute to the Zn(2+) site. One can recognise an SET domain in the interval 367–694 (VRLQVFKTEQ…ARTELTWDYG (328 aa)). Residues 377–379 (KGW) and D418 each bind S-adenosyl-L-methionine. A disordered region spans residues 508 to 547 (FVSSESVTPEDNDGFKPPREHLNSKTKGAQKDSSSNHVDE). Residues 520–530 (DGFKPPREHLN) are compositionally biased toward basic and acidic residues. The span at 532–543 (KTKGAQKDSSSN) shows a compositional bias: polar residues. S-adenosyl-L-methionine contacts are provided by residues R648 and 651 to 652 (NH). Zn(2+) is bound by residues C654, C707, C709, and C714.

Belongs to the class V-like SAM-binding methyltransferase superfamily. In terms of tissue distribution, ubiquitous. Highest expression in heart, testis and ovary.

It localises to the nucleus. The protein localises to the chromosome. The catalysed reaction is N(6),N(6)-dimethyl-L-lysyl(9)-[histone H3] + S-adenosyl-L-methionine = N(6),N(6),N(6)-trimethyl-L-lysyl(9)-[histone H3] + S-adenosyl-L-homocysteine + H(+). In terms of biological role, histone methyltransferase involved in left-right axis specification in early development and mitosis. Specifically trimethylates 'Lys-9' of histone H3 (H3K9me3). H3K9me3 is a specific tag for epigenetic transcriptional repression that recruits HP1 (CBX1, CBX3 and/or CBX5) proteins to methylated histones. Contributes to H3K9me3 in both the interspersed repetitive elements and centromere-associated repeats. Plays a role in chromosome condensation and segregation during mitosis. This Homo sapiens (Human) protein is Histone-lysine N-methyltransferase SETDB2 (SETDB2).